Here is a 241-residue protein sequence, read N- to C-terminus: 1-(5-phosphoribosyl)-5-[(5-phosphoribosylamino)methylideneamino] imidazole-4-carboxamide isomerase (241 aa).

The active-site Proton acceptor is the Asp10. Asp129 acts as the Proton donor in catalysis.

This sequence belongs to the HisA/HisF family.

The protein localises to the cytoplasm. The catalysed reaction is 1-(5-phospho-beta-D-ribosyl)-5-[(5-phospho-beta-D-ribosylamino)methylideneamino]imidazole-4-carboxamide = 5-[(5-phospho-1-deoxy-D-ribulos-1-ylimino)methylamino]-1-(5-phospho-beta-D-ribosyl)imidazole-4-carboxamide. It participates in amino-acid biosynthesis; L-histidine biosynthesis; L-histidine from 5-phospho-alpha-D-ribose 1-diphosphate: step 4/9. The chain is 1-(5-phosphoribosyl)-5-[(5-phosphoribosylamino)methylideneamino] imidazole-4-carboxamide isomerase from Salinispora arenicola (strain CNS-205).